We begin with the raw amino-acid sequence, 430 residues long: Dihydroorotase (430 aa).

Residues His-57 and His-59 each coordinate Zn(2+). Residues His-59–Arg-61 and Asn-91 contribute to the substrate site. Residues Asp-151, His-178, and His-231 each coordinate Zn(2+). Asn-277 contributes to the substrate binding site. Asp-304 is a binding site for Zn(2+). Residue Asp-304 is part of the active site. Substrate is bound by residues His-308 and Pro-322–Gly-323.

The protein belongs to the metallo-dependent hydrolases superfamily. DHOase family. Class I DHOase subfamily. The cofactor is Zn(2+).

The catalysed reaction is (S)-dihydroorotate + H2O = N-carbamoyl-L-aspartate + H(+). The protein operates within pyrimidine metabolism; UMP biosynthesis via de novo pathway; (S)-dihydroorotate from bicarbonate: step 3/3. In terms of biological role, catalyzes the reversible cyclization of carbamoyl aspartate to dihydroorotate. The polypeptide is Dihydroorotase (Mycobacterium leprae (strain TN)).